The chain runs to 227 residues: Cytochrome c oxidase subunit 2 (227 aa).

At 1 to 14 the chain is on the mitochondrial intermembrane side; it reads MAHRAQVGLQDATS. A helical membrane pass occupies residues 15 to 45; the sequence is PIMEELVIFHDHALMIIFLICFLVLYALFLT. Over 46–59 the chain is Mitochondrial matrix; that stretch reads LTTKLTNTNISDAQ. Residues 60–87 form a helical membrane-spanning segment; the sequence is EMETIWTTLPAIILILIALPSLRILYLT. Over 88-227 the chain is Mitochondrial intermembrane; it reads DEINDPSFTI…IFEMGPVFAL (140 aa). Cu cation is bound by residues H161, C196, E198, C200, H204, and M207. Position 198 (E198) interacts with Mg(2+).

The protein belongs to the cytochrome c oxidase subunit 2 family. As to quaternary structure, component of the cytochrome c oxidase (complex IV, CIV), a multisubunit enzyme composed of 14 subunits. The complex is composed of a catalytic core of 3 subunits MT-CO1, MT-CO2 and MT-CO3, encoded in the mitochondrial DNA, and 11 supernumerary subunits COX4I, COX5A, COX5B, COX6A, COX6B, COX6C, COX7A, COX7B, COX7C, COX8 and NDUFA4, which are encoded in the nuclear genome. The complex exists as a monomer or a dimer and forms supercomplexes (SCs) in the inner mitochondrial membrane with NADH-ubiquinone oxidoreductase (complex I, CI) and ubiquinol-cytochrome c oxidoreductase (cytochrome b-c1 complex, complex III, CIII), resulting in different assemblies (supercomplex SCI(1)III(2)IV(1) and megacomplex MCI(2)III(2)IV(2)). Found in a complex with TMEM177, COA6, COX18, COX20, SCO1 and SCO2. Interacts with TMEM177 in a COX20-dependent manner. Interacts with COX20. Interacts with COX16. It depends on Cu cation as a cofactor.

It localises to the mitochondrion inner membrane. It catalyses the reaction 4 Fe(II)-[cytochrome c] + O2 + 8 H(+)(in) = 4 Fe(III)-[cytochrome c] + 2 H2O + 4 H(+)(out). Component of the cytochrome c oxidase, the last enzyme in the mitochondrial electron transport chain which drives oxidative phosphorylation. The respiratory chain contains 3 multisubunit complexes succinate dehydrogenase (complex II, CII), ubiquinol-cytochrome c oxidoreductase (cytochrome b-c1 complex, complex III, CIII) and cytochrome c oxidase (complex IV, CIV), that cooperate to transfer electrons derived from NADH and succinate to molecular oxygen, creating an electrochemical gradient over the inner membrane that drives transmembrane transport and the ATP synthase. Cytochrome c oxidase is the component of the respiratory chain that catalyzes the reduction of oxygen to water. Electrons originating from reduced cytochrome c in the intermembrane space (IMS) are transferred via the dinuclear copper A center (CU(A)) of subunit 2 and heme A of subunit 1 to the active site in subunit 1, a binuclear center (BNC) formed by heme A3 and copper B (CU(B)). The BNC reduces molecular oxygen to 2 water molecules using 4 electrons from cytochrome c in the IMS and 4 protons from the mitochondrial matrix. In Pongo pygmaeus (Bornean orangutan), this protein is Cytochrome c oxidase subunit 2 (MT-CO2).